Reading from the N-terminus, the 177-residue chain is MSRIGKLPITIPEGVKVSLNDLEVRISGPKGELSKTFKGNIVVLLAENKLLVKPLAVSKNARAMWGTARSIISNMVTGVKEGFQLKLEVNGVGYRAMVKGKYLNLMLAKSHNTKIEIPPDIKIDVPKQNIIILEGIDKEKLGQFASIIIKQRPPEPYKGKGIRFENQFIPRKEGKKN.

It belongs to the universal ribosomal protein uL6 family. In terms of assembly, part of the 50S ribosomal subunit.

Its function is as follows. This protein binds to the 23S rRNA, and is important in its secondary structure. It is located near the subunit interface in the base of the L7/L12 stalk, and near the tRNA binding site of the peptidyltransferase center. The polypeptide is Large ribosomal subunit protein uL6 (Rickettsia canadensis (strain McKiel)).